Consider the following 291-residue polypeptide: Exosome complex exonuclease RRP42 (291 aa).

Position 2 is an N-acetylalanine (Ala2). At Lys116 the chain carries N6-acetyllysine.

It belongs to the RNase PH family. In terms of assembly, component of the RNA exosome core complex (Exo-9), composed of EXOSC1, EXOSC2, EXOSC3, EXOSC4, EXOSC5, EXOSC6, EXOSC7, EXOSC8 and EXOSC9; within the complex interacts with EXOSC2 and EXOSC4. The catalytically inactive RNA exosome core complex (Exo-9) associates with the catalytic subunit EXOSC10/RRP6. Exo-9 may associate with DIS3 to form the nucleolar exosome complex, or DIS3L to form the cytoplasmic exosome complex. Exo-9 is formed by a hexameric base ring consisting of the heterodimers EXOSC4-EXOSC9, EXOSC5-EXOSC8 and EXOSC6-EXOSC7, and a cap ring consisting of EXOSC1, EXOSC2 and EXOSC3. The RNA exosome complex associates with cofactors C1D/RRP47, MPHOSPH6/MPP6 and MTREX/MTR4. Interacts with ZC3HAV1. Interacts with DIS3; the interaction is direct.

The protein resides in the nucleus. It is found in the nucleolus. It localises to the cytoplasm. In terms of biological role, non-catalytic component of the RNA exosome complex which has 3'-&gt;5' exoribonuclease activity and participates in a multitude of cellular RNA processing and degradation events. In the nucleus, the RNA exosome complex is involved in proper maturation of stable RNA species such as rRNA, snRNA and snoRNA, in the elimination of RNA processing by-products and non-coding 'pervasive' transcripts, such as antisense RNA species and promoter-upstream transcripts (PROMPTs), and of mRNAs with processing defects, thereby limiting or excluding their export to the cytoplasm. The RNA exosome may be involved in Ig class switch recombination (CSR) and/or Ig variable region somatic hypermutation (SHM) by targeting AICDA deamination activity to transcribed dsDNA substrates. In the cytoplasm, the RNA exosome complex is involved in general mRNA turnover and specifically degrades inherently unstable mRNAs containing AU-rich elements (AREs) within their 3' untranslated regions, and in RNA surveillance pathways, preventing translation of aberrant mRNAs. It seems to be involved in degradation of histone mRNA. The catalytic inactive RNA exosome core complex of 9 subunits (Exo-9) is proposed to play a pivotal role in the binding and presentation of RNA for ribonucleolysis, and to serve as a scaffold for the association with catalytic subunits and accessory proteins or complexes. The polypeptide is Exosome complex exonuclease RRP42 (Exosc7) (Mus musculus (Mouse)).